Reading from the N-terminus, the 215-residue chain is UPF0502 protein YceH (215 aa).

Residue lysine 80 is modified to N6-acetyllysine.

This sequence belongs to the UPF0502 family.

The chain is UPF0502 protein YceH from Shigella sonnei (strain Ss046).